Reading from the N-terminus, the 198-residue chain is Elongation factor Ts (198 aa).

The tract at residues 81 to 84 (TDFV) is involved in Mg(2+) ion dislocation from EF-Tu.

This sequence belongs to the EF-Ts family.

It is found in the cytoplasm. Associates with the EF-Tu.GDP complex and induces the exchange of GDP to GTP. It remains bound to the aminoacyl-tRNA.EF-Tu.GTP complex up to the GTP hydrolysis stage on the ribosome. The chain is Elongation factor Ts from Leptospira biflexa serovar Patoc (strain Patoc 1 / Ames).